Here is a 327-residue protein sequence, read N- to C-terminus: Undecaprenyl-phosphate 4-deoxy-4-formamido-L-arabinose transferase (327 aa).

Residues 1-235 (MFDAAPIKKV…TCLTTTPLRL (235 aa)) are Cytoplasmic-facing. A helical membrane pass occupies residues 236 to 256 (LSLLGSVIAIGGFSLSVLLIV). Residues 257–269 (LRLALGPQWAAEG) lie on the Periplasmic side of the membrane. Residues 270 to 290 (VFMLFAVLFTFIGAQFIGMGL) form a helical membrane-spanning segment. Topologically, residues 291-327 (LGEYIGRIYNDVRARPRYFVQQVIYPESTSFTEESHQ) are cytoplasmic.

The protein belongs to the glycosyltransferase 2 family.

Its subcellular location is the cell inner membrane. It carries out the reaction UDP-4-deoxy-4-formamido-beta-L-arabinose + di-trans,octa-cis-undecaprenyl phosphate = 4-deoxy-4-formamido-alpha-L-arabinopyranosyl di-trans,octa-cis-undecaprenyl phosphate + UDP. It participates in glycolipid biosynthesis; 4-amino-4-deoxy-alpha-L-arabinose undecaprenyl phosphate biosynthesis; 4-amino-4-deoxy-alpha-L-arabinose undecaprenyl phosphate from UDP-4-deoxy-4-formamido-beta-L-arabinose and undecaprenyl phosphate: step 1/2. The protein operates within bacterial outer membrane biogenesis; lipopolysaccharide biosynthesis. Catalyzes the transfer of 4-deoxy-4-formamido-L-arabinose from UDP to undecaprenyl phosphate. The modified arabinose is attached to lipid A and is required for resistance to polymyxin and cationic antimicrobial peptides. The sequence is that of Undecaprenyl-phosphate 4-deoxy-4-formamido-L-arabinose transferase from Salmonella newport (strain SL254).